We begin with the raw amino-acid sequence, 397 residues long: Riboflavin biosynthesis protein RibBA (397 aa).

Residues 1 to 199 (MFHRIEEALE…IEDLIAYRRH (199 aa)) are DHBP synthase. D-ribulose 5-phosphate contacts are provided by residues 26-27 (RE), Asp-31, 138-142 (RAGHT), and Glu-162. Position 27 (Glu-27) interacts with Mg(2+). A Mg(2+)-binding site is contributed by His-141. Residues 200–397 (HETLVTREVE…VNKLGHLLNL (198 aa)) are GTP cyclohydrolase II. Residue 250-254 (RVHSE) coordinates GTP. The Zn(2+) site is built by Cys-255, Cys-266, and Cys-268. GTP contacts are provided by residues Gln-271, 293 to 295 (EGR), and Thr-315. Asp-327 (proton acceptor; for GTP cyclohydrolase activity) is an active-site residue. The Nucleophile; for GTP cyclohydrolase activity role is filled by Arg-329. Residues Thr-350 and Lys-355 each contribute to the GTP site.

In the N-terminal section; belongs to the DHBP synthase family. This sequence in the C-terminal section; belongs to the GTP cyclohydrolase II family. Mg(2+) serves as cofactor. Requires Mn(2+) as cofactor. The cofactor is Zn(2+).

The catalysed reaction is D-ribulose 5-phosphate = (2S)-2-hydroxy-3-oxobutyl phosphate + formate + H(+). It carries out the reaction GTP + 4 H2O = 2,5-diamino-6-hydroxy-4-(5-phosphoribosylamino)-pyrimidine + formate + 2 phosphate + 3 H(+). Its pathway is cofactor biosynthesis; riboflavin biosynthesis; 2-hydroxy-3-oxobutyl phosphate from D-ribulose 5-phosphate: step 1/1. It functions in the pathway cofactor biosynthesis; riboflavin biosynthesis; 5-amino-6-(D-ribitylamino)uracil from GTP: step 1/4. Catalyzes the conversion of D-ribulose 5-phosphate to formate and 3,4-dihydroxy-2-butanone 4-phosphate. Functionally, catalyzes the conversion of GTP to 2,5-diamino-6-ribosylamino-4(3H)-pyrimidinone 5'-phosphate (DARP), formate and pyrophosphate. The sequence is that of Riboflavin biosynthesis protein RibBA from Bacillus cereus (strain B4264).